Here is a 210-residue protein sequence, read N- to C-terminus: LexA repressor (210 aa).

The segment at residues 29–49 (VREIGEAVDLSSTSTVHGHIS) is a DNA-binding region (H-T-H motif). Catalysis depends on for autocatalytic cleavage activity residues Ser-130 and Lys-168.

Belongs to the peptidase S24 family. Homodimer.

It catalyses the reaction Hydrolysis of Ala-|-Gly bond in repressor LexA.. Functionally, represses a number of genes involved in the response to DNA damage (SOS response), including recA and lexA. In the presence of single-stranded DNA, RecA interacts with LexA causing an autocatalytic cleavage which disrupts the DNA-binding part of LexA, leading to derepression of the SOS regulon and eventually DNA repair. This chain is LexA repressor, found in Lactiplantibacillus plantarum (strain ATCC BAA-793 / NCIMB 8826 / WCFS1) (Lactobacillus plantarum).